Consider the following 250-residue polypeptide: Triosephosphate isomerase (250 aa).

9–11 serves as a coordination point for substrate; it reads NWK. The active-site Electrophile is His95. The Proton acceptor role is filled by Glu167. Substrate contacts are provided by residues Gly173, Ser212, and 233–234; that span reads GG.

This sequence belongs to the triosephosphate isomerase family. In terms of assembly, homodimer.

It is found in the cytoplasm. The catalysed reaction is D-glyceraldehyde 3-phosphate = dihydroxyacetone phosphate. Its pathway is carbohydrate biosynthesis; gluconeogenesis. It participates in carbohydrate degradation; glycolysis; D-glyceraldehyde 3-phosphate from glycerone phosphate: step 1/1. Its function is as follows. Involved in the gluconeogenesis. Catalyzes stereospecifically the conversion of dihydroxyacetone phosphate (DHAP) to D-glyceraldehyde-3-phosphate (G3P). This chain is Triosephosphate isomerase, found in Nitrosococcus oceani (strain ATCC 19707 / BCRC 17464 / JCM 30415 / NCIMB 11848 / C-107).